Reading from the N-terminus, the 724-residue chain is Acyl-coenzyme A oxidase 2 (724 aa).

Residues 1–48 (MAMLSQPNDGHDHPEKKDPDTTPKQVAGVISSQDPPHPAKDVAEERAR) are disordered. Composition is skewed to basic and acidic residues over residues 9–21 (DGHDHPEKKDPDT) and 37–48 (HPAKDVAEERAR).

This sequence belongs to the acyl-CoA oxidase family. Requires FAD as cofactor.

The protein resides in the peroxisome. The catalysed reaction is a 2,3-saturated acyl-CoA + O2 = a (2E)-enoyl-CoA + H2O2. Its pathway is lipid metabolism; peroxisomal fatty acid beta-oxidation. The polypeptide is Acyl-coenzyme A oxidase 2 (POX2) (Candida tropicalis (Yeast)).